A 141-amino-acid chain; its full sequence is Nucleoside diphosphate kinase (141 aa).

Positions 11, 59, 87, 93, 104, and 114 each coordinate ATP. Catalysis depends on H117, which acts as the Pros-phosphohistidine intermediate.

Belongs to the NDK family. Homotetramer. Mg(2+) is required as a cofactor.

Its subcellular location is the cytoplasm. The catalysed reaction is a 2'-deoxyribonucleoside 5'-diphosphate + ATP = a 2'-deoxyribonucleoside 5'-triphosphate + ADP. The enzyme catalyses a ribonucleoside 5'-diphosphate + ATP = a ribonucleoside 5'-triphosphate + ADP. Major role in the synthesis of nucleoside triphosphates other than ATP. The ATP gamma phosphate is transferred to the NDP beta phosphate via a ping-pong mechanism, using a phosphorylated active-site intermediate. The polypeptide is Nucleoside diphosphate kinase (Hamiltonella defensa subsp. Acyrthosiphon pisum (strain 5AT)).